A 156-amino-acid chain; its full sequence is Small ribosomal subunit protein uS7 (156 aa).

This sequence belongs to the universal ribosomal protein uS7 family. Part of the 30S ribosomal subunit. Contacts proteins S9 and S11.

One of the primary rRNA binding proteins, it binds directly to 16S rRNA where it nucleates assembly of the head domain of the 30S subunit. Is located at the subunit interface close to the decoding center, probably blocks exit of the E-site tRNA. The chain is Small ribosomal subunit protein uS7 from Gloeobacter violaceus (strain ATCC 29082 / PCC 7421).